Reading from the N-terminus, the 153-residue chain is Arginine repressor (153 aa).

Belongs to the ArgR family.

Its subcellular location is the cytoplasm. It participates in amino-acid biosynthesis; L-arginine biosynthesis [regulation]. Functionally, regulates arginine biosynthesis genes. In Haemophilus ducreyi (strain 35000HP / ATCC 700724), this protein is Arginine repressor.